Consider the following 116-residue polypeptide: Class I hydrophobin 1 (116 aa).

Positions 1–19 (MLFKQAILVATTLTDLAVA) are cleaved as a signal peptide. Intrachain disulfides connect cysteine 35-cysteine 95, cysteine 42-cysteine 89, cysteine 43-cysteine 76, and cysteine 96-cysteine 109. 2 N-linked (GlcNAc...) asparagine glycosylation sites follow: asparagine 44 and asparagine 100.

This sequence belongs to the fungal hydrophobin family. Self-assembles to form functional amyloid fibrils called rodlets. Self-assembly into fibrillar rodlets occurs spontaneously at hydrophobic:hydrophilic interfaces and the rodlets further associate laterally to form amphipathic monolayers.

Its subcellular location is the secreted. It is found in the cell wall. Aerial growth, conidiation, and dispersal of filamentous fungi in the environment rely upon a capability of their secreting small amphipathic proteins called hydrophobins (HPBs) with low sequence identity. Class I can self-assemble into an outermost layer of rodlet bundles on aerial cell surfaces, conferring cellular hydrophobicity that supports fungal growth, development and dispersal; whereas Class II form highly ordered films at water-air interfaces through intermolecular interactions but contribute nothing to the rodlet structure. The protein is Class I hydrophobin 1 of Pleurotus ostreatus (Oyster mushroom).